We begin with the raw amino-acid sequence, 208 residues long: Ribosomal RNA large subunit methyltransferase E (208 aa).

Glycine 63, tryptophan 65, aspartate 83, aspartate 99, and aspartate 124 together coordinate S-adenosyl-L-methionine. Lysine 164 functions as the Proton acceptor in the catalytic mechanism.

This sequence belongs to the class I-like SAM-binding methyltransferase superfamily. RNA methyltransferase RlmE family.

It is found in the cytoplasm. The catalysed reaction is uridine(2552) in 23S rRNA + S-adenosyl-L-methionine = 2'-O-methyluridine(2552) in 23S rRNA + S-adenosyl-L-homocysteine + H(+). Its function is as follows. Specifically methylates the uridine in position 2552 of 23S rRNA at the 2'-O position of the ribose in the fully assembled 50S ribosomal subunit. In Enterobacter sp. (strain 638), this protein is Ribosomal RNA large subunit methyltransferase E.